We begin with the raw amino-acid sequence, 102 residues long: DET1- and DDB1-associated protein 1 (102 aa).

Residues 67-102 form a disordered region; that stretch reads NAAKKRDQEQVEIEGENSAPPRKIARTDSQDMNEDT.

Belongs to the DDA1 family. Component of numerous DCX (DDB1-CUL4-X-box) E3 ubiquitin-protein ligase complexes which consist of a core of DDB1, cullin-4 (CUL4A or CUL4B), DDA1 and RBX1.

The protein operates within protein modification; protein ubiquitination. Functionally, functions as a component of numerous distinct DCX (DDB1-CUL4-X-box) E3 ubiquitin-protein ligase complexes which mediate the ubiquitination and subsequent proteasomal degradation of target proteins. In the DCX complexes, acts as a scaffolding subunit required to stabilize the complex. In Gallus gallus (Chicken), this protein is DET1- and DDB1-associated protein 1.